The sequence spans 288 residues: NAD kinase (288 aa).

Catalysis depends on D70, which acts as the Proton acceptor. NAD(+)-binding positions include D70 to G71, N144 to D145, R155, K172, D174, T185 to S190, and Q245.

This sequence belongs to the NAD kinase family. Requires a divalent metal cation as cofactor.

The protein localises to the cytoplasm. The enzyme catalyses NAD(+) + ATP = ADP + NADP(+) + H(+). In terms of biological role, involved in the regulation of the intracellular balance of NAD and NADP, and is a key enzyme in the biosynthesis of NADP. Catalyzes specifically the phosphorylation on 2'-hydroxyl of the adenosine moiety of NAD to yield NADP. The protein is NAD kinase of Geobacter sp. (strain M21).